The sequence spans 346 residues: tRNA pseudouridine synthase D (346 aa).

Residue aspartate 83 is the Nucleophile of the active site. Positions 159–305 (GVPNYFGEQR…LKQERRALRV (147 aa)) constitute a TRUD domain.

The protein belongs to the pseudouridine synthase TruD family.

The enzyme catalyses uridine(13) in tRNA = pseudouridine(13) in tRNA. Responsible for synthesis of pseudouridine from uracil-13 in transfer RNAs. This Hydrogenovibrio crunogenus (strain DSM 25203 / XCL-2) (Thiomicrospira crunogena) protein is tRNA pseudouridine synthase D.